A 290-amino-acid polypeptide reads, in one-letter code: MSIISTKYLLQDAQEKGYAVPAFNIHNAETIQAILEVCREMKSPVILAGTPGTFKHIALEEIYALCSAYSTSFDIPLALHLDHHESLDDIRHKVNAGVRSAMIDGSHFPFEENVKLVKSVVDFCHSRDCSVEAELGRLGGVEDDMSVDAENAFLTDPQEAKRFVELTGVDSLAVAIGTAHGLYTKKPKIDFQRLAEIREVVDIPLVLHGASDVPDEYVRRTIELGVCKVNVATELKIAFAAAVKKWFIENPDGNDPRYYMRVGMNAMKEVVRSKITVCNSYGKLLPALQY.

Asp-82 serves as the catalytic Proton donor. Residues His-83 and His-180 each coordinate Zn(2+). Residue Gly-181 participates in dihydroxyacetone phosphate binding. His-208 contacts Zn(2+). Dihydroxyacetone phosphate-binding positions include 209–211 and 230–233; these read GAS and NVAT.

This sequence belongs to the class II fructose-bisphosphate aldolase family. TagBP aldolase KbaY subfamily. Homotetramer. Forms a complex with KbaZ. Zn(2+) serves as cofactor.

The catalysed reaction is D-tagatofuranose 1,6-bisphosphate = D-glyceraldehyde 3-phosphate + dihydroxyacetone phosphate. The protein operates within carbohydrate metabolism; D-tagatose 6-phosphate degradation; D-glyceraldehyde 3-phosphate and glycerone phosphate from D-tagatose 6-phosphate: step 2/2. Functionally, catalytic subunit of the tagatose-1,6-bisphosphate aldolase KbaYZ, which catalyzes the reversible aldol condensation of dihydroxyacetone phosphate (DHAP or glycerone-phosphate) with glyceraldehyde 3-phosphate (G3P) to produce tagatose 1,6-bisphosphate (TBP). Requires KbaZ subunit for full activity and stability. The chain is D-tagatose-1,6-bisphosphate aldolase subunit KbaY from Salmonella arizonae (strain ATCC BAA-731 / CDC346-86 / RSK2980).